Here is a 1013-residue protein sequence, read N- to C-terminus: MTGMRGLSVFISDVRNCQNKEAERLRVDKELGNIRTCFKNEKVLTPYKKKKYVWKMLYIHMLGYDVDFGHMEAVSLISAPKYPEKQVGYIVTSCLLNENHDFLKLAINTVRNDIIGRNETFQCLALTLVGNIGGRDFAESLAPDVQKLLISSSCRPLVRKKAALCLLRLFRKNPDAVNVDGWADRMAQLLDERDLGVLTSSTSLLVALVSNNHEAYSSCLPKCVKILERLARNQDVPQEYTYYGIPSPWLQVKAMRALQYFPTIEDPSTRKALFEVLQRILMGTDVVKNVNKNNASHAVLFEALSLVMHLDAEKEMMSQCVALLGKFISVREPNIRYLGLENMTRMLMVTDVQDIIKKHQSQIITSLKDPDISIRRRALDLLYGMCDVSNAKDIVEELLQYLSTAEFSMREELSLKAAILAEKFAPDLSWYVDVILQLIDKAGDFVSDDIWFRVVQFVTNNEDLQPYAASKAREYMDKIAIHETMVKVSAYILGEYGHLLARQPGCSASELFSILHEKLPTVSTPTIPILLSTYAKLLMHAQPPDPELQKKVWAVFKKYESCIDVEIQQRAVEYFELSKKGPAFMDVLAEMPKFPERQSSLIKKAENVEDTADQSAIKLRAQQQPSNAIVLADPQPVNGAPPPLKVPILSGSTDPESVARSLSHPNGTLSNIDPQTPSPDLLSDLLGPLAIEAPPGAVSYEQHGPVGAEGVPDEIDGSAIVPVEEQTNTVELIGNIAERFHALCLKDSGVLYEDPHIQIGIKAEWRGHHGRLVLFMGNKNTSPLTSVQALILPPAHLRLDLSPVPDTIPPRAQVQSPLEVMNIRPSRDVAVLDFSYKFGTNVVSAKLRIPATLNKFLQPLQLTSEEFFPQWRAISGPPLKLQEVVRGVRPLALPEMANLFNSFHVTICPGLDPNPNNLVASTTFYSETTGAMLCLARIETDPADRTQLRLTVGSGDPTLTFELKEFIKEQLITIPMGSRALVPAAGPAPSPAVQPPSPAALADDPGAMLAGLL.

4 HEAT repeats span residues 254 to 289 (AMRA…VVKN), 354 to 391 (DIIK…VSNA), 393 to 430 (DIVE…DLSW), and 521 to 565 (TVST…CIDV). Residues 652–676 (STDPESVARSLSHPNGTLSNIDPQT) form a disordered region. The segment covering 663–675 (SHPNGTLSNIDPQ) has biased composition (polar residues). The GAE domain maps to 742–841 (ALCLKDSGVL…LDFSYKFGTN (100 aa)). Residues 760–1013 (GIKAEWRGHH…DPGAMLAGLL (254 aa)) are required for AP180 binding.

The protein belongs to the adaptor complexes large subunit family. As to quaternary structure, adaptor protein complex 2 (AP-2) is a heterotetramer composed of two large adaptins (alpha-type and beta-type subunits), a medium adaptin (mu-type subunit) and a small adaptin (sigma-type subunit). Interacts with AP180.

The protein resides in the membrane. It is found in the coated pit. Its function is as follows. Subunit of the adaptor protein complex 2 (AP-2). Adaptor protein complexes function in protein transport via transport vesicles in different membrane traffic pathways. Adaptor protein complexes are vesicle coat components and appear to be involved in cargo selection and vesicle formation. AP-2 is involved in clathrin-dependent endocytosis in which cargo proteins are incorporated into vesicles surrounded by clathrin (clathrin-coated vesicles, CCVs) which are destined for fusion with the early endosome. The complex binds polyphosphoinositides. This chain is AP-2 complex subunit alpha-2 (ALPHAC-AD), found in Arabidopsis thaliana (Mouse-ear cress).